The following is a 371-amino-acid chain: F-box protein At2g26850 (371 aa).

The F-box domain occupies 59–105 (KMSILDLPDLPLDCILELLPPSELCTMARVCSSLRERCVSDHLWEKH).

This is F-box protein At2g26850 from Arabidopsis thaliana (Mouse-ear cress).